The chain runs to 589 residues: Serine/threonine-protein phosphatase 2A 65 kDa regulatory subunit A alpha isoform (589 aa).

A2 carries the post-translational modification N-acetylalanine. HEAT repeat units follow at residues 8 to 46 (DSLY…GVER), 47 to 84 (TRSE…GGPE), 85 to 123 (YVHC…SPSD), 124 to 161 (LEAH…VSSA), 162 to 200 (VKAE…ELDN), 201 to 239 (VKSE…PQED), 240 to 278 (LEAL…GPEI), 279 to 321 (TKTD…RENV), 322 to 360 (IMTQ…GKDS), 361 to 399 (TIEH…GIRQ), 400 to 438 (LSQS…GVEF), 439 to 477 (FDEK…GKEW), 478 to 516 (AHAT…GQDI), 517 to 555 (TTKH…DNST), and 556 to 589 (LQSE…LSLA). Residues 8 to 399 (DSLYPIAVLI…CVNEVIGIRQ (392 aa)) form a PP2A subunit B binding region. The polyoma small and medium T antigens Binding stretch occupies residues 47–321 (TRSELLPFLT…NLSADCRENV (275 aa)). The tract at residues 85-239 (YVHCLLPPLE…NIAQLLPQED (155 aa)) is SV40 small T antigen binding. The residue at position 280 (K280) is an N6-acetyllysine. The tract at residues 400–589 (LSQSLLPAIV…QEALTVLSLA (190 aa)) is PP2A subunit C binding.

Belongs to the phosphatase 2A regulatory subunit A family. PP2A consists of a common heterodimeric core enzyme, composed of PPP2CA a 36 kDa catalytic subunit (subunit C) and PPP2R1A a 65 kDa constant regulatory subunit (PR65 or subunit A), that associates with a variety of regulatory subunits. Proteins that associate with the core dimer include three families of regulatory subunits B (the R2/B/PR55/B55, R3/B''/PR72/PR130/PR59 and R5/B'/B56 families), the 48 kDa variable regulatory subunit, viral proteins, and cell signaling molecules. Found in a complex with at least ARL2, PPP2CB, PPP2R1A, PPP2R2A, PPP2R5E and TBCD. Interacts with the PP2A C catalytic subunit PPP2CA. Interacts with the PP2A B subunit PPP2R2A. Interacts with the PP2A B subunit PPP2R5D. Interacts with FOXO1; the interaction dephosphorylates FOXO1 on AKT-mediated phosphorylation sites. Interacts with IPO9. Interacts with TP53 and SGO1. Interacts with PLA2G16; this interaction might decrease PP2A activity. Interacts with CTTNBP2NL. Interacts with GNA12; the interaction promotes protein phosphatase 2A activation causing dephosphorylation of MAPT. Interacts with CIP2A; this interaction stabilizes CIP2A. Interacts with PABIR1/FAM122A. Interacts with ADCY8; antagonizes interaction between ADCY8 and calmodulin. Interacts with CRTC3 (when phosphorylated at 'Ser-391'). Interacts with SPRY2. Part of the core of STRIPAK complexes composed of PP2A catalytic and scaffolding subunits, the striatins (PP2A regulatory subunits), the striatin-associated proteins MOB4, STRIP1 and STRIP2, PDCD10 and members of the STE20 kinases, such as STK24 and STK26. Component of the Integrator-PP2A (INTAC) complex, composed of the Integrator core complex and protein phosphatase 2A subunits PPP2CA and PPP2R1A.

It localises to the cytoplasm. The protein resides in the nucleus. The protein localises to the chromosome. It is found in the centromere. Its subcellular location is the lateral cell membrane. It localises to the cell projection. The protein resides in the dendrite. Functionally, the PR65 subunit of protein phosphatase 2A serves as a scaffolding molecule to coordinate the assembly of the catalytic subunit and a variable regulatory B subunit. Upon interaction with GNA12 promotes dephosphorylation of microtubule associated protein TAU/MAPT. Required for proper chromosome segregation and for centromeric localization of SGO1 in mitosis. Together with RACK1 adapter, mediates dephosphorylation of AKT1 at 'Ser-473', preventing AKT1 activation and AKT-mTOR signaling pathway. Dephosphorylation of AKT1 is essential for regulatory T-cells (Treg) homeostasis and stability. Part of the striatin-interacting phosphatase and kinase (STRIPAK) complexes. STRIPAK complexes have critical roles in protein (de)phosphorylation and are regulators of multiple signaling pathways including Hippo, MAPK, nuclear receptor and cytoskeleton remodeling. Different types of STRIPAK complexes are involved in a variety of biological processes such as cell growth, differentiation, apoptosis, metabolism and immune regulation. Key mediator of a quality checkpoint during transcription elongation as part of the Integrator-PP2A (INTAC) complex. The INTAC complex drives premature transcription termination of transcripts that are unfavorably configured for transcriptional elongation: within the INTAC complex, acts as a scaffolding subunit for PPP2CA, which catalyzes dephosphorylation of the C-terminal domain (CTD) of Pol II subunit POLR2A/RPB1 and SUPT5H/SPT5, thereby preventing transcriptional elongation. Regulates the recruitment of the SKA complex to kinetochores. The sequence is that of Serine/threonine-protein phosphatase 2A 65 kDa regulatory subunit A alpha isoform (PPP2R1A) from Bos taurus (Bovine).